Reading from the N-terminus, the 126-residue chain is Large ribosomal subunit protein bL12 (126 aa).

The protein belongs to the bacterial ribosomal protein bL12 family. Homodimer. Part of the ribosomal stalk of the 50S ribosomal subunit. Forms a multimeric L10(L12)X complex, where L10 forms an elongated spine to which 2 to 4 L12 dimers bind in a sequential fashion. Binds GTP-bound translation factors.

In terms of biological role, forms part of the ribosomal stalk which helps the ribosome interact with GTP-bound translation factors. Is thus essential for accurate translation. The chain is Large ribosomal subunit protein bL12 from Rhizorhabdus wittichii (strain DSM 6014 / CCUG 31198 / JCM 15750 / NBRC 105917 / EY 4224 / RW1) (Sphingomonas wittichii).